A 270-amino-acid polypeptide reads, in one-letter code: ParA family protein MPN_688 (270 aa).

Belongs to the ParA family.

In Mycoplasma pneumoniae (strain ATCC 29342 / M129 / Subtype 1) (Mycoplasmoides pneumoniae), this protein is ParA family protein MPN_688.